A 501-amino-acid chain; its full sequence is ATP synthase subunit alpha, chloroplastic (501 aa).

170-177 (GDRQTGKT) is an ATP binding site.

This sequence belongs to the ATPase alpha/beta chains family. F-type ATPases have 2 components, CF(1) - the catalytic core - and CF(0) - the membrane proton channel. CF(1) has five subunits: alpha(3), beta(3), gamma(1), delta(1), epsilon(1). CF(0) has four main subunits: a, b, b' and c.

The protein resides in the plastid. It is found in the chloroplast thylakoid membrane. It catalyses the reaction ATP + H2O + 4 H(+)(in) = ADP + phosphate + 5 H(+)(out). Functionally, produces ATP from ADP in the presence of a proton gradient across the membrane. The alpha chain is a regulatory subunit. The sequence is that of ATP synthase subunit alpha, chloroplastic from Nephroselmis olivacea (Green alga).